A 215-amino-acid polypeptide reads, in one-letter code: Rod-determining factor A (215 aa).

In terms of biological role, involved in cell-shape determination. Required for the formation of rods and wild-type-like motility. This is Rod-determining factor A from Haloferax volcanii (strain ATCC 29605 / DSM 3757 / JCM 8879 / NBRC 14742 / NCIMB 2012 / VKM B-1768 / DS2) (Halobacterium volcanii).